Consider the following 145-residue polypeptide: Aklanonic acid methyl ester cyclase DnrD (145 aa).

Residue Gln106 participates in substrate binding.

Belongs to the polyketide cyclase DnrD family. Homotetramer.

It catalyses the reaction methyl aklanonate = aklaviketone. The protein operates within antibiotic biosynthesis; daunorubicin biosynthesis. It participates in antibiotic biosynthesis; carminomycin biosynthesis. Its pathway is antibiotic biosynthesis; rhodomycin biosynthesis. It functions in the pathway antibiotic biosynthesis; aclacinomycin biosynthesis. In terms of biological role, involved in the biosynthesis of aklavinone which is an important precursor common to the formation of the clinically significant anthracyclines such as carminomycin, daunorubicin (daunomycin), rhodomycin, aclacinomycin T (aklavin) and aclacinomycin A (aclarubicin). These compounds are aromatic polyketide antibiotics that exhibit high cytotoxicity and are widely applied in the chemotherapy of a variety of cancers. Catalyzes the cyclization of aklanonic acid methyl ester to yield aklaviketone presumably via an intramolecular aldol condensation mechanism, although water is not eliminated. The sequence is that of Aklanonic acid methyl ester cyclase DnrD (dnrD) from Streptomyces peucetius.